The following is a 159-amino-acid chain: MNKQISKKPAQRTIALNKKALHDYYVEQRFEAGLVLEGWEVKSIRAGRVQLRDSYVVFKGGEAWLIGAHLSPLPNVAEYMKADPQRSRKLLLNKREIGKLFGAVQKQGLTVVPLDLHWHKNHVKVEIALAKGKKTHDKRETIKRREWEREKHRVLKSHG.

This sequence belongs to the SmpB family.

It is found in the cytoplasm. Its function is as follows. Required for rescue of stalled ribosomes mediated by trans-translation. Binds to transfer-messenger RNA (tmRNA), required for stable association of tmRNA with ribosomes. tmRNA and SmpB together mimic tRNA shape, replacing the anticodon stem-loop with SmpB. tmRNA is encoded by the ssrA gene; the 2 termini fold to resemble tRNA(Ala) and it encodes a 'tag peptide', a short internal open reading frame. During trans-translation Ala-aminoacylated tmRNA acts like a tRNA, entering the A-site of stalled ribosomes, displacing the stalled mRNA. The ribosome then switches to translate the ORF on the tmRNA; the nascent peptide is terminated with the 'tag peptide' encoded by the tmRNA and targeted for degradation. The ribosome is freed to recommence translation, which seems to be the essential function of trans-translation. The polypeptide is SsrA-binding protein (Coxiella burnetii (strain CbuG_Q212) (Coxiella burnetii (strain Q212))).